The sequence spans 178 residues: Alkyl hydroperoxide reductase AhpD (178 aa).

Cys-130 serves as the catalytic Proton donor. Cys-130 and Cys-133 are joined by a disulfide. Cys-133 functions as the Cysteine sulfenic acid (-SOH) intermediate in the catalytic mechanism.

The protein belongs to the AhpD family. Homotrimer.

The catalysed reaction is N(6)-[(R)-dihydrolipoyl]-L-lysyl-[lipoyl-carrier protein] + a hydroperoxide = N(6)-[(R)-lipoyl]-L-lysyl-[lipoyl-carrier protein] + an alcohol + H2O. Antioxidant protein with alkyl hydroperoxidase activity. Required for the reduction of the AhpC active site cysteine residues and for the regeneration of the AhpC enzyme activity. The polypeptide is Alkyl hydroperoxide reductase AhpD (Mycobacterium ulcerans (strain Agy99)).